A 436-amino-acid chain; its full sequence is Methyl-accepting chemotaxis protein Amb0994 (436 aa).

Topologically, residues 1-8 (METTLGSY) are cytoplasmic. Residues 9–29 (ARTLSLGMLVPSAICLLAGTF) form a helical membrane-spanning segment. A topological domain (periplasmic) is located at residue glycine 30. A helical transmembrane segment spans residues 31–51 (LLGGSSIALWVVIAVSLLGVV). The Cytoplasmic portion of the chain corresponds to 52–436 (GGVKIGGSAR…DGFIARIGGR (385 aa)). Residues 180–416 (AATELEASSG…QVADAASELS (237 aa)) enclose the Methyl-accepting transducer domain. A Glutamate methyl ester (Gln) modification is found at glutamine 211. A Glutamate methyl ester (Glu) modification is found at glutamate 225. Positions 321–436 (TEDITSQVAH…DGFIARIGGR (116 aa)) are required for interaction with MamK and to respond to the magnetic field.

The protein belongs to the methyl-accepting chemotaxis (MCP) protein family. Interacts with MamK at cell poles and septa.

It localises to the cell inner membrane. Probable methyl-accepting taxis protein. May be the receptor that senses the torque generated from the interaction between the magnetosome dipole moment and the external magnetic field. Overproduction interferes with magnetotaxis, cells respond more slowly to changes in the magnetic field; requires the MamK-interacting C-terminus of the protein. The effect of magnetic sensing is to control flagellar rotation. Functionally, chemotactic-signal transducers respond to changes in the concentration of attractants and repellents in the environment, transduce a signal from the outside to the inside of the cell, and facilitate sensory adaptation through variation of methylation levels. Attractants increase the level of methylation while repellents decrease the level of methylation. This is Methyl-accepting chemotaxis protein Amb0994 from Paramagnetospirillum magneticum (strain ATCC 700264 / AMB-1) (Magnetospirillum magneticum).